The chain runs to 565 residues: Urocanate hydratase (565 aa).

Residues 58–59, Q136, 182–184, E202, R207, 245–246, 266–270, 276–277, and Y325 each bind NAD(+); these read GG, GMG, NA, QTSAH, and YL. The active site involves C413. NAD(+) is bound at residue G495.

Belongs to the urocanase family. The cofactor is NAD(+).

The protein resides in the cytoplasm. It catalyses the reaction 4-imidazolone-5-propanoate = trans-urocanate + H2O. The protein operates within amino-acid degradation; L-histidine degradation into L-glutamate; N-formimidoyl-L-glutamate from L-histidine: step 2/3. Catalyzes the conversion of urocanate to 4-imidazolone-5-propionate. This Vibrio vulnificus (strain CMCP6) protein is Urocanate hydratase.